Consider the following 67-residue polypeptide: UPF0253 protein VV2574 (67 aa).

It belongs to the UPF0253 family.

This is UPF0253 protein VV2574 from Vibrio vulnificus (strain YJ016).